The following is a 414-amino-acid chain: MQSWPVPHIDSVPGTPSPLHLYDSADGEVKRLNIKGETATMYVCGITPYDSTHLGHAATYLTFDLIYRQLLDNGYKVNYAQNITDVDDPLFERAERDGVDWRELGTSQINLFRSDMELLSVFPPQHFVGAMEAIDEITEMVQALLDAGAAYVVDDPDYPDVYASIEATKNFGYESNYSREQMETFFAERGGDPERPGKRDPLDALIWRAHREGEPAWESPFGPGRPGWHIECSAIATNRLGSSFDIQGGGSDLKFPHHEFSAAHAEAALGVERMAQSYVHTGMIGLEGTKMSKSLGNLVFVHKLVEAGVDPSAIRLGVFSGHYREDRDWSDEVLHTAQERLERWRAASRNPGTVEEIKEVVHNVRLALAEDLDTQRAIAVLDQWAEQALGAAEASEEASDVLRTAVNSLLGVRL.

Residue Cys44 coordinates Zn(2+). L-cysteinyl-5'-AMP is bound by residues Cys44–Thr47, Thr59, and Asn82–Thr84. The short motif at Ile46–His56 is the 'HIGH' region element. Positions Glu188–Pro193 match the 'ERGGDP' region motif. Trp228 serves as a coordination point for L-cysteinyl-5'-AMP. Cys232 lines the Zn(2+) pocket. L-cysteinyl-5'-AMP is bound at residue Gly250–Asp252. His257 provides a ligand contact to Zn(2+). Ile284 provides a ligand contact to L-cysteinyl-5'-AMP. The 'KMSKS' region signature appears at Lys290–Ser294.

This sequence belongs to the class-I aminoacyl-tRNA synthetase family. MshC subfamily. In terms of assembly, monomer. It depends on Zn(2+) as a cofactor.

It carries out the reaction 1D-myo-inositol 2-amino-2-deoxy-alpha-D-glucopyranoside + L-cysteine + ATP = 1D-myo-inositol 2-(L-cysteinylamino)-2-deoxy-alpha-D-glucopyranoside + AMP + diphosphate + H(+). In terms of biological role, catalyzes the ATP-dependent condensation of GlcN-Ins and L-cysteine to form L-Cys-GlcN-Ins. This is L-cysteine:1D-myo-inositol 2-amino-2-deoxy-alpha-D-glucopyranoside ligase from Corynebacterium aurimucosum (strain ATCC 700975 / DSM 44827 / CIP 107346 / CN-1) (Corynebacterium nigricans).